The chain runs to 320 residues: Major pollen allergen Pha a 5.1 (320 aa).

The first 23 residues, 1–23 (MAVQKYTMALFLAVALVAGPAAP), serve as a signal peptide directing secretion. The disordered stretch occupies residues 21-45 (AAPTPPTPRTPPLLPPPRARDKATL). Residues 22–37 (APTPPTPRTPPLLPPP) are compositionally biased toward pro residues.

It belongs to the Poa p IX/Phl p VI allergen family.

The sequence is that of Major pollen allergen Pha a 5.1 from Phalaris aquatica (Canary grass).